The sequence spans 344 residues: DNA-directed RNA polymerase subunit alpha (344 aa).

The segment at 1 to 238 (MKVIKTAPLI…KQLGVFGEKP (238 aa)) is alpha N-terminal domain (alpha-NTD). Residues 253–344 (DAKDLSAKIE…EKLEDKGGND (92 aa)) are alpha C-terminal domain (alpha-CTD).

This sequence belongs to the RNA polymerase alpha chain family. As to quaternary structure, homodimer. The RNAP catalytic core consists of 2 alpha, 1 beta, 1 beta' and 1 omega subunit. When a sigma factor is associated with the core the holoenzyme is formed, which can initiate transcription.

The enzyme catalyses RNA(n) + a ribonucleoside 5'-triphosphate = RNA(n+1) + diphosphate. DNA-dependent RNA polymerase catalyzes the transcription of DNA into RNA using the four ribonucleoside triphosphates as substrates. This is DNA-directed RNA polymerase subunit alpha from Helicobacter acinonychis (strain Sheeba).